Here is a 350-residue protein sequence, read N- to C-terminus: Phosphotriesterase-related protein (350 aa).

Residues His-22, His-24, Glu-169, His-201, His-230, and Asp-298 each contribute to the a divalent metal cation site.

Belongs to the metallo-dependent hydrolases superfamily. Phosphotriesterase family. A divalent metal cation serves as cofactor.

This Drosophila melanogaster (Fruit fly) protein is Phosphotriesterase-related protein.